Reading from the N-terminus, the 70-residue chain is UPF0352 protein Sden_2336 (70 aa).

Belongs to the UPF0352 family.

The polypeptide is UPF0352 protein Sden_2336 (Shewanella denitrificans (strain OS217 / ATCC BAA-1090 / DSM 15013)).